We begin with the raw amino-acid sequence, 106 residues long: Phosphoribosyl-ATP pyrophosphatase (106 aa).

Belongs to the PRA-PH family.

The protein localises to the cytoplasm. The catalysed reaction is 1-(5-phospho-beta-D-ribosyl)-ATP + H2O = 1-(5-phospho-beta-D-ribosyl)-5'-AMP + diphosphate + H(+). Its pathway is amino-acid biosynthesis; L-histidine biosynthesis; L-histidine from 5-phospho-alpha-D-ribose 1-diphosphate: step 2/9. The sequence is that of Phosphoribosyl-ATP pyrophosphatase from Geotalea daltonii (strain DSM 22248 / JCM 15807 / FRC-32) (Geobacter daltonii).